The chain runs to 844 residues: Translation initiation factor IF-2 (844 aa).

Basic and acidic residues predominate over residues 1–11 (MTEDVKADVPK). 2 disordered regions span residues 1–35 (MTEDVKADVPKKLSIQRRTKTTVSGTTTSGKSKAV) and 79–248 (RLEA…KGAA). Low complexity predominate over residues 21 to 33 (TTVSGTTTSGKSK). Residues 79–161 (RLEAEKAATK…AAEEAKRYAE (83 aa)) show a composition bias toward basic and acidic residues. Residues 162 to 175 (ADDSDNESSSEDYS) are compositionally biased toward acidic residues. The span at 200 to 210 (RGKNKVAKAKK) shows a compositional bias: basic residues. Basic and acidic residues predominate over residues 211–237 (GGRDDENSKNSKNERESNRKNQKDAKF). The tr-type G domain maps to 343 to 513 (TRAPVVTIMG…LLQSEVLELT (171 aa)). The G1 stretch occupies residues 352–359 (GHVDHGKT). 352-359 (GHVDHGKT) provides a ligand contact to GTP. The tract at residues 377–381 (GITQH) is G2. The tract at residues 399-402 (DTPG) is G3. GTP is bound by residues 399–403 (DTPGH) and 453–456 (NKID). Residues 453-456 (NKID) are G4. Positions 489-491 (SAK) are G5.

The protein belongs to the TRAFAC class translation factor GTPase superfamily. Classic translation factor GTPase family. IF-2 subfamily.

Its subcellular location is the cytoplasm. Its function is as follows. One of the essential components for the initiation of protein synthesis. Protects formylmethionyl-tRNA from spontaneous hydrolysis and promotes its binding to the 30S ribosomal subunits. Also involved in the hydrolysis of GTP during the formation of the 70S ribosomal complex. In Haemophilus influenzae (strain PittGG), this protein is Translation initiation factor IF-2.